Here is a 103-residue protein sequence, read N- to C-terminus: Large ribosomal subunit protein uL23 (103 aa).

The protein belongs to the universal ribosomal protein uL23 family. As to quaternary structure, part of the 50S ribosomal subunit. Contacts protein L29, and trigger factor when it is bound to the ribosome.

One of the early assembly proteins it binds 23S rRNA. One of the proteins that surrounds the polypeptide exit tunnel on the outside of the ribosome. Forms the main docking site for trigger factor binding to the ribosome. This is Large ribosomal subunit protein uL23 from Aquifex aeolicus (strain VF5).